Here is a 207-residue protein sequence, read N- to C-terminus: Small ribosomal subunit protein uS4 (207 aa).

The interval 26–47 (AINNKNYKPGQQGNSSSISKPS) is disordered. Over residues 28–39 (NNKNYKPGQQGN) the composition is skewed to polar residues. The S4 RNA-binding domain occupies 95 to 158 (RRLDAVVYRL…KQIPIVIGAI (64 aa)).

The protein belongs to the universal ribosomal protein uS4 family. Part of the 30S ribosomal subunit. Contacts protein S5. The interaction surface between S4 and S5 is involved in control of translational fidelity.

Functionally, one of the primary rRNA binding proteins, it binds directly to 16S rRNA where it nucleates assembly of the body of the 30S subunit. Its function is as follows. With S5 and S12 plays an important role in translational accuracy. This is Small ribosomal subunit protein uS4 from Orientia tsutsugamushi (strain Boryong) (Rickettsia tsutsugamushi).